The sequence spans 264 residues: MILKTTGGSPHFNIALEEALLEESAEHGIAIARLWVNPDSIIVGYTSDVGREVNIEQARAEGVPVVRRISGGGAVFHDLGNMNVSVYIPRRLGVDEAYALVTSIILKTLHRLGIEGRVENGNDVAVGPWKVSGSAAAIRARATLAHATLLLTTDPSRIRRLVIPQLHRVERGEVTPVKYNPNSLERITGERMEVWQAARLLEESVKHALGEPENVGRDILQEAVIRARELCKTKYSQKGFWSPLGLGACREPQVAPMTSPSYVL.

In terms of domain architecture, BPL/LPL catalytic spans 26–213; sequence EHGIAIARLW…SVKHALGEPE (188 aa). Residues Arg68, 73 to 76, and Lys130 each bind ATP; that span reads GAVF. Residue Lys130 coordinates (R)-lipoate.

This sequence belongs to the LplA family. Monomer.

Its subcellular location is the cytoplasm. It carries out the reaction L-lysyl-[lipoyl-carrier protein] + (R)-lipoate + ATP = N(6)-[(R)-lipoyl]-L-lysyl-[lipoyl-carrier protein] + AMP + diphosphate + H(+). Its pathway is protein modification; protein lipoylation via exogenous pathway; protein N(6)-(lipoyl)lysine from lipoate: step 1/2. The protein operates within protein modification; protein lipoylation via exogenous pathway; protein N(6)-(lipoyl)lysine from lipoate: step 2/2. Its function is as follows. Catalyzes both the ATP-dependent activation of exogenously supplied lipoate to lipoyl-AMP and the transfer of the activated lipoyl onto the lipoyl domains of lipoate-dependent enzymes. This chain is Putative lipoate-protein ligase A (lplA), found in Aeropyrum pernix (strain ATCC 700893 / DSM 11879 / JCM 9820 / NBRC 100138 / K1).